The primary structure comprises 286 residues: NADPH-dependent 7-cyano-7-deazaguanine reductase (286 aa).

92–94 (IES) is a substrate binding site. 94–95 (SK) serves as a coordination point for NADPH. Cysteine 194 acts as the Thioimide intermediate in catalysis. Catalysis depends on aspartate 201, which acts as the Proton donor. 233 to 234 (HE) lines the substrate pocket. 262-263 (RG) is a binding site for NADPH.

Belongs to the GTP cyclohydrolase I family. QueF type 2 subfamily. In terms of assembly, homodimer.

The protein resides in the cytoplasm. It carries out the reaction 7-aminomethyl-7-carbaguanine + 2 NADP(+) = 7-cyano-7-deazaguanine + 2 NADPH + 3 H(+). It participates in tRNA modification; tRNA-queuosine biosynthesis. Functionally, catalyzes the NADPH-dependent reduction of 7-cyano-7-deazaguanine (preQ0) to 7-aminomethyl-7-deazaguanine (preQ1). This Shewanella sp. (strain MR-7) protein is NADPH-dependent 7-cyano-7-deazaguanine reductase.